A 157-amino-acid chain; its full sequence is NAD(P)H-quinone oxidoreductase subunit N (157 aa).

Belongs to the complex I NdhN subunit family. In terms of assembly, NDH-1 can be composed of about 15 different subunits; different subcomplexes with different compositions have been identified which probably have different functions.

Its subcellular location is the cellular thylakoid membrane. It carries out the reaction a plastoquinone + NADH + (n+1) H(+)(in) = a plastoquinol + NAD(+) + n H(+)(out). The catalysed reaction is a plastoquinone + NADPH + (n+1) H(+)(in) = a plastoquinol + NADP(+) + n H(+)(out). NDH-1 shuttles electrons from an unknown electron donor, via FMN and iron-sulfur (Fe-S) centers, to quinones in the respiratory and/or the photosynthetic chain. The immediate electron acceptor for the enzyme in this species is believed to be plastoquinone. Couples the redox reaction to proton translocation, and thus conserves the redox energy in a proton gradient. Cyanobacterial NDH-1 also plays a role in inorganic carbon-concentration. The polypeptide is NAD(P)H-quinone oxidoreductase subunit N (Synechococcus sp. (strain CC9902)).